Here is a 231-residue protein sequence, read N- to C-terminus: Large ribosomal subunit protein uL1 (231 aa).

The protein belongs to the universal ribosomal protein uL1 family. Part of the 50S ribosomal subunit.

Binds directly to 23S rRNA. The L1 stalk is quite mobile in the ribosome, and is involved in E site tRNA release. In terms of biological role, protein L1 is also a translational repressor protein, it controls the translation of the L11 operon by binding to its mRNA. The sequence is that of Large ribosomal subunit protein uL1 from Mycoplasmopsis synoviae (strain 53) (Mycoplasma synoviae).